Here is a 1172-residue protein sequence, read N- to C-terminus: Lysylphosphatidylglycerol biosynthesis bifunctional protein LysX (1172 aa).

The tract at residues 1-34 is disordered; sequence MGLHLTVPGLRRDGRGVQSNSHDTSSKTTADISR. The segment at 1 to 663 is phosphatidylglycerol lysyltransferase; it reads MGLHLTVPGL…LLHHDGSAPD (663 aa). The segment covering 17-31 has biased composition (polar residues); that stretch reads VQSNSHDTSSKTTAD. The next 7 membrane-spanning stretches (helical) occupy residues 80-100, 122-142, 146-166, 177-197, 214-234, 272-292, and 612-632; these read VPAAAGWTVGVIATLSLLASV, FPDTNFAWSFVLALLAAALTA, IAWLVLLANMVLAAVVNAAEI, FGENLGFAVHVVAIVVLVLGY, AVWLAGAVVGIVASWGLVELF, AIFGLFGAFALIGAAIVLFLS, and VIPRVGVASVIAEGFLVLPFS. The interval 664 to 1172 is lysine--tRNA ligase; the sequence is VSGLRQVGLT…TLPFPLAKPH (509 aa). Residues 726 to 804 constitute a DNA-binding region (OB); it reads VSVSGRIMRI…SLIVSGWRLI (79 aa). 2 residues coordinate Mg(2+): Asp1084 and Glu1091.

This sequence in the N-terminal section; belongs to the LPG synthetase family. The protein in the C-terminal section; belongs to the class-II aminoacyl-tRNA synthetase family. Requires Mg(2+) as cofactor.

It localises to the cell membrane. It catalyses the reaction tRNA(Lys) + L-lysine + ATP = L-lysyl-tRNA(Lys) + AMP + diphosphate. The catalysed reaction is L-lysyl-tRNA(Lys) + a 1,2-diacyl-sn-glycero-3-phospho-(1'-sn-glycerol) = a 1,2-diacyl-sn-glycero-3-phospho-1'-(3'-O-L-lysyl)-sn-glycerol + tRNA(Lys). Catalyzes the production of L-lysyl-tRNA(Lys)transfer and the transfer of a lysyl group from L-lysyl-tRNA(Lys) to membrane-bound phosphatidylglycerol (PG), which produces lysylphosphatidylglycerol (LPG), one of the components of the bacterial membrane with a positive net charge. LPG synthesis contributes to the resistance to cationic antimicrobial peptides (CAMPs) and likely protects M.tuberculosis against the CAMPs produced by competiting microorganisms (bacteriocins). In fact, the modification of anionic phosphatidylglycerol with positively charged L-lysine results in repulsion of the peptides. This chain is Lysylphosphatidylglycerol biosynthesis bifunctional protein LysX (lysX), found in Mycobacterium bovis (strain BCG / Pasteur 1173P2).